The primary structure comprises 310 residues: MTVTVRVSAKVNLALGVGGLAPDGFHPLATVFEAICIYDEVAVTRRDDSRITLTVSGEDADQVPTDETNLAWRAVELVREEFASEWGKRGHGADIHIDKSIPVAGGMAGGSADAAGALMAAAALCRLPYSPEELQPLAAQLGSDVPFCLTGGVALGRGRGDRLAPVICRGRHRWVFATSNQGLSTPAVYRRFDELGGTPGGETVPNDLISALTRGDLDAVAASLSNDLQAAAIDLRPELEEVLTVGREVGALTALVSGSGPTCAFLVRDTAGAKKVSAAVSNLPQVHRTRTARGPAAGAQLLPGPVGSFA.

Residue Lys10 is part of the active site. Position 102 to 112 (102 to 112) interacts with ATP; it reads PVAGGMAGGSA. Residue Asp144 is part of the active site. Residues 289–310 are disordered; sequence TRTARGPAAGAQLLPGPVGSFA.

This sequence belongs to the GHMP kinase family. IspE subfamily.

The enzyme catalyses 4-CDP-2-C-methyl-D-erythritol + ATP = 4-CDP-2-C-methyl-D-erythritol 2-phosphate + ADP + H(+). Its pathway is isoprenoid biosynthesis; isopentenyl diphosphate biosynthesis via DXP pathway; isopentenyl diphosphate from 1-deoxy-D-xylulose 5-phosphate: step 3/6. Catalyzes the phosphorylation of the position 2 hydroxy group of 4-diphosphocytidyl-2C-methyl-D-erythritol. The chain is 4-diphosphocytidyl-2-C-methyl-D-erythritol kinase from Cutibacterium acnes (strain DSM 16379 / KPA171202) (Propionibacterium acnes).